Reading from the N-terminus, the 461-residue chain is High-affinity Na(+)/H(+) antiporter NhaS3 (461 aa).

A run of 11 helical transmembrane segments spans residues 22-42, 58-78, 113-133, 148-170, 175-197, 209-229, 239-259, 280-300, 360-380, 391-411, and 424-444; these read TEIAPLVLAGVLLSLVVIYFA, VLGELVGGVLVGVSALKLLLF, SEVISVISELGVIILLFEIGL, AIVAVVGVVTPFSLGTIGLMTIF, IPAIFAGAALTATSIGITAKVLA, IIIGAAVLDDILGIIVLAVVG, ISNIIYLILSATGFVVGSILI, LLLVSICVAFVLSYIAQIVQL, GLIIAAFLILVAIVGKVVTGF, LAIGVGMIPRGEVGLVFAGVG, and AIIVMVIVTTFVAPPWLRAVF.

This sequence belongs to the monovalent cation:proton antiporter 2 (CPA2) transporter (TC 2.A.37) family.

The protein localises to the cellular thylakoid membrane. Na(+)/H(+) antiporter that transports sodium from the cytoplasm into the thylakoid lumen in exchange for protons. Contributes to sodium homeostasis and tolerance. Also has Li(+)/H(+) antiport activity under K(+)-free conditions, but not under K(+)-rich conditions. The sequence is that of High-affinity Na(+)/H(+) antiporter NhaS3 (nhaS3) from Synechocystis sp. (strain ATCC 27184 / PCC 6803 / Kazusa).